A 220-amino-acid polypeptide reads, in one-letter code: 2-dehydro-3-deoxy-phosphogluconate aldolase (220 aa).

The Proton acceptor role is filled by E48. Pyruvate is bound by residues R52, T76, and K136. The active-site Schiff-base intermediate with substrate is K136.

Belongs to the KHG/KDPG aldolase family. As to quaternary structure, homotrimer.

It catalyses the reaction 2-dehydro-3-deoxy-6-phospho-D-gluconate = D-glyceraldehyde 3-phosphate + pyruvate. It functions in the pathway carbohydrate acid metabolism; 2-dehydro-3-deoxy-D-gluconate degradation; D-glyceraldehyde 3-phosphate and pyruvate from 2-dehydro-3-deoxy-D-gluconate: step 2/2. Its function is as follows. Involved in the degradation of glucose via the Entner-Doudoroff pathway. Catalyzes the reversible, stereospecific retro-aldol cleavage of 2-keto-3-deoxy-6-phosphogluconate (KDPG) to pyruvate and D-glyceraldehyde-3-phosphate. The sequence is that of 2-dehydro-3-deoxy-phosphogluconate aldolase (eda) from Pseudomonas aeruginosa (strain ATCC 15692 / DSM 22644 / CIP 104116 / JCM 14847 / LMG 12228 / 1C / PRS 101 / PAO1).